Reading from the N-terminus, the 357-residue chain is Glucose-6-phosphatase catalytic subunit 1 (357 aa).

Topologically, residues Met-1–Asp-28 are lumenal. A helical transmembrane segment spans residues Trp-29–Ile-49. Over Trp-50 to Lys-60 the chain is Cytoplasmic. The chain crosses the membrane as a helical span at residues Leu-61 to Gly-81. The Lumenal segment spans residues Gln-82–Ser-117. Arg-83 is a substrate binding site. Asn-96 carries an N-linked (GlcNAc...) asparagine glycan. Residues Gly-118 to Phe-138 form a helical membrane-spanning segment. Catalysis depends on His-119, which acts as the Proton donor. Over Arg-139 to Arg-147 the chain is Cytoplasmic. The chain crosses the membrane as a helical span at residues Phe-148–Leu-168. At Ser-169–Arg-170 the chain is on the lumenal side. Arg-170 serves as a coordination point for substrate. The helical transmembrane segment at Ile-171–Val-191 threads the bilayer. His-176 serves as the catalytic Nucleophile. Residues Ala-192–Tyr-209 lie on the Cytoplasmic side of the membrane. The helical transmembrane segment at Phe-210–Leu-230 threads the bilayer. The Lumenal segment spans residues Gly-231–Asp-254. The helical transmembrane segment at Thr-255–Leu-275 threads the bilayer. Over Asn-276–Trp-291 the chain is Cytoplasmic. The helical transmembrane segment at Phe-292–Leu-312 threads the bilayer. Over Lys-313–Leu-320 the chain is Lumenal. A helical membrane pass occupies residues Ile-321–Ile-341. The Cytoplasmic portion of the chain corresponds to Pro-342 to Leu-357. The short motif at Lys-354 to Leu-357 is the Prevents secretion from ER element.

Belongs to the glucose-6-phosphatase family.

Its subcellular location is the endoplasmic reticulum membrane. It catalyses the reaction D-glucose 6-phosphate + H2O = D-glucose + phosphate. Its pathway is carbohydrate biosynthesis; gluconeogenesis. In terms of biological role, hydrolyzes glucose-6-phosphate to glucose in the endoplasmic reticulum. Forms with the glucose-6-phosphate transporter (SLC37A4/G6PT) the complex responsible for glucose production in the terminal step of glycogenolysis and gluconeogenesis. Hence, it is the key enzyme in homeostatic regulation of blood glucose levels. In Canis lupus familiaris (Dog), this protein is Glucose-6-phosphatase catalytic subunit 1 (G6PC1).